We begin with the raw amino-acid sequence, 734 residues long: Photosystem I P700 chlorophyll a apoprotein A2 (734 aa).

A run of 8 helical transmembrane segments spans residues Ile46–Ala69, Leu135–Gln158, Leu175–Ile199, Ile273–Tyr291, Ile330–Tyr353, Ala369–Ile395, Ala417–His439, and Phe517–Val535. [4Fe-4S] cluster contacts are provided by Cys559 and Cys568. 2 helical membrane-spanning segments follow: residues Ala575–Trp596 and Leu643–Ile665. His654, Met662, and Tyr670 together coordinate chlorophyll a. Trp671 contributes to the phylloquinone binding site. Residues Leu707–Ala727 form a helical membrane-spanning segment.

It belongs to the PsaA/PsaB family. The PsaA/B heterodimer binds the P700 chlorophyll special pair and subsequent electron acceptors. PSI consists of a core antenna complex that captures photons, and an electron transfer chain that converts photonic excitation into a charge separation. The eukaryotic PSI reaction center is composed of at least 11 subunits. The cofactor is P700 is a chlorophyll a/chlorophyll a' dimer, A0 is one or more chlorophyll a, A1 is one or both phylloquinones and FX is a shared 4Fe-4S iron-sulfur center..

It localises to the plastid. The protein resides in the chloroplast thylakoid membrane. It carries out the reaction reduced [plastocyanin] + hnu + oxidized [2Fe-2S]-[ferredoxin] = oxidized [plastocyanin] + reduced [2Fe-2S]-[ferredoxin]. Its function is as follows. PsaA and PsaB bind P700, the primary electron donor of photosystem I (PSI), as well as the electron acceptors A0, A1 and FX. PSI is a plastocyanin-ferredoxin oxidoreductase, converting photonic excitation into a charge separation, which transfers an electron from the donor P700 chlorophyll pair to the spectroscopically characterized acceptors A0, A1, FX, FA and FB in turn. Oxidized P700 is reduced on the lumenal side of the thylakoid membrane by plastocyanin. This Dioscorea elephantipes (Elephant's foot yam) protein is Photosystem I P700 chlorophyll a apoprotein A2.